The chain runs to 1054 residues: Proteoglycan 4 (1054 aa).

A signal peptide spans 1-24 (MGWKILPVCLSLLLPVVLIQQVSS). SMB domains follow at residues 26-69 (DLSS…PELS) and 66-108 (PELS…EEVH). Cystine bridges form between Cys30–Cys34, Cys30–Cys46, Cys34–Cys64, Cys44–Cys46, Cys44–Cys57, Cys50–Cys56, Cys57–Cys64, Cys70–Cys74, Cys70–Cys86, Cys74–Cys104, Cys84–Cys86, Cys84–Cys97, Cys90–Cys96, and Cys97–Cys104. Asn109 is a glycosylation site (N-linked (GlcNAc...) asparagine). Low complexity predominate over residues 110–125 (STSPSSKTAPTPAGAS). Positions 110–764 (STSPSSKTAP…PLIPGPPVLF (655 aa)) are disordered. A glycan (O-linked (GalNAc...) serine) is linked at Ser135. Positions 162-175 (QESSSSSSSSSSTI) are enriched in low complexity. A compositionally biased stretch (basic and acidic residues) spans 188–200 (ELQKNPNVKDNKK). The segment covering 229–238 (TPPPPDPPTT) has biased composition (pro residues). Thr237 and Thr250 each carry an O-linked (GalNAc...) threonine glycan. Low complexity predominate over residues 286–295 (TTATNKQSSA). Residue Thr301 is glycosylated (O-linked (GalNAc...) threonine). O-linked (GalNAc...) serine glycosylation is present at Ser302. A compositionally biased stretch (basic and acidic residues) spans 302–318 (SVKETRSAEKTSDKDVE). An O-linked (GalNAc...) threonine glycan is attached at Thr306. O-linked (GalNAc...) serine glycosylation is present at Ser313. The 1; approximate repeat unit spans residues 317–324 (VEPTSTTP). The 37 X 8 AA repeats of K-X-P-X-P-T-T-X stretch occupies residues 317 to 618 (VEPTSTTPKN…TPKKPEPTTT (302 aa)). A compositionally biased stretch (polar residues) spans 319 to 328 (PTSTTPKNSA). The 2; approximate repeat unit spans residues 325–332 (KNSAPTTT). O-linked (GalNAc...) serine glycosylation is present at Ser327. The segment covering 329-339 (PTTTKKPVTTT) has biased composition (low complexity). O-linked (GalNAc...) threonine glycosylation is found at Thr330, Thr338, Thr354, Thr362, Thr369, Thr377, Thr378, Thr385, Thr386, Thr393, and Thr394. Residues 333–340 (KKPVTTTK) form a 3; approximate repeat. One copy of the 4; approximate repeat lies at 349 to 356 (QEPEPTTA). The stretch at 357 to 364 (KEPPPTTK) is repeat 5. Residues 364–399 (KKPEPTTRKEPEPTTPKEPEPTTPKEPEPTTPKEPE) are compositionally biased toward basic and acidic residues. The 6; approximate repeat unit spans residues 365–371 (KPEPTTR). A run of 5 repeats spans residues 372-379 (KEPEPTTP), 380-387 (KEPEPTTP), 388-395 (KEPEPTTP), 396-403 (KEPEPTTP), and 404-411 (KEPPPTTK). Residues 400–426 (PTTPKEPPPTTKKPEPTTPKEPGPTTP) are compositionally biased toward pro residues. One copy of the 12; approximate repeat lies at 412 to 418 (KPEPTTP). Residues Thr416, Thr417, Thr424, Thr432, Thr433, Thr440, Thr441, and Thr448 are each glycosylated (O-linked (GalNAc...) threonine). Tandem repeats lie at residues 419–426 (KEPGPTTP), 427–434 (KEPEPTTT), and 435–442 (KEPEPTTT). Over residues 427–550 (KEPEPTTTKE…PEPTTPKKPE (124 aa)) the composition is skewed to basic and acidic residues. One copy of the 16; approximate repeat lies at 443 to 450 (KEPESTTR). Tandem repeats lie at residues 451-458 (KEPEPTTP), 459-466 (KEPEPTTP), 467-474 (KEPEPTTL), 475-482 (KEPEPTTP), 483-490 (KEPEPTTP), 491-498 (KEPEPTTP), 499-506 (KEPEPTTP), 507-514 (KEPEPTTP), 515-522 (KEPEPTTP), 523-530 (KEPEPTTP), 531-538 (KEPEPTTP), 539-546 (KEPEPTTP), 547-554 (KKPEPTTP), 555-562 (KEPVPTTP), 563-570 (KEPEPTTP), 571-578 (KEPEPTTP), 579-586 (KEPEPTTR), 587-594 (KEPEPTTP), 595-602 (KEPEPTTP), 603-610 (KEPEPTTP), and 611-618 (KKPEPTTT). Residues Thr472, Thr480, Thr481, Thr488, Thr489, Thr496, Thr497, Thr504, Thr505, Thr512, Thr520, Thr521, Thr528, and Thr529 are each glycosylated (O-linked (GalNAc...) threonine). The segment covering 551-562 (PTTPKEPVPTTP) has biased composition (pro residues). 7 O-linked (GalNAc...) threonine glycosylation sites follow: Thr553, Thr560, Thr561, Thr568, Thr569, Thr576, and Thr577. The span at 563–614 (KEPEPTTPKEPEPTTPKEPEPTTRKEPEPTTPKEPEPTTPKEPEPTTPKKPE) shows a compositional bias: basic and acidic residues. O-linked (GalNAc...) threonine glycans are attached at residues Thr592, Thr600, and Thr601. Over residues 615 to 624 (PTTTSPKTTT) the composition is skewed to low complexity. O-linked (GalNAc...) threonine glycans are attached at residues Thr622, Thr624, Thr628, Thr629, and Thr692. A compositionally biased stretch (basic residues) spans 672-699 (KPTKKPTKAPKKPTSTKKPKTPKTRKPK). A compositionally biased stretch (low complexity) spans 700-712 (TTPSPLKTTSATP). A compositionally biased stretch (polar residues) spans 713–735 (ELNTTPLEVMLPTTTIPKQTPNP). A disulfide bridge links Cys795 with Cys1053. Hemopexin repeat units lie at residues 797–840 (GKPV…VWGI) and 841–888 (PSPI…FGGL). Asn808 carries an N-linked (GlcNAc...) asparagine glycan. A glycan (O-linked (GalNAc...) threonine) is linked at Thr810. N-linked (GlcNAc...) asparagine glycosylation occurs at Asn938.

In terms of assembly, homodimer; disulfide-linked. Post-translationally, N-glycosylated. In terms of processing, O-glycosylated; contains glycosaminoglycan chondroitin sulfate and keratan sulfate. O-glycosylated with sialylated oligosaccharides which are predominantly represented by the monosialylated core type I structure, NeuNAcalpha2-3Galbeta1-3GalNAc, with smaller amounts of disialylated O-glycans. The disulfide bond between Cys-795 and Cys-1053 is essential for protein cleavage. Post-translationally, proteolytically cleaved by cathepsin CTSG. Highly expressed in cartilage, bone and liver and weakly expressed in heart, brain and muscle. Expressed in the surface chondrocytes and in synovial intimal cells. Isoform B is expressed in bone, small intestine, muscle, testis, heart, liver and lung. Isoform C and isoform D are widely expressed.

The protein resides in the secreted. Functionally, plays a role in boundary lubrication within articulating joints. Prevents protein deposition onto cartilage from synovial fluid by controlling adhesion-dependent synovial growth and inhibiting the adhesion of synovial cells to the cartilage surface. The polypeptide is Proteoglycan 4 (Prg4) (Mus musculus (Mouse)).